The chain runs to 1052 residues: Membrane-bound transcription factor site-1 protease (1052 aa).

A signal peptide spans 1 to 17; the sequence is MKLVNIWLLLLVVLLCG. Residues 18–186 constitute a propeptide that is removed on maturation; it reads KKHLGDRLEK…TGRHSSRRLL (169 aa). Serine 168 is subject to Phosphoserine; by FAM20C. Residues 187-998 lie on the Lumenal side of the membrane; it reads RAIPRQVAQT…IMPGRYNQEV (812 aa). The region spanning 190-472 is the Peptidase S8 domain; sequence PRQVAQTLQA…HGKLDLLRAY (283 aa). The Charge relay system role is filled by aspartate 218. N-linked (GlcNAc...) asparagine glycosylation is present at asparagine 236. The active-site Charge relay system is the histidine 249. A glycan (N-linked (GlcNAc...) asparagine) is linked at asparagine 305. Serine 414 functions as the Charge relay system in the catalytic mechanism. 2 N-linked (GlcNAc...) asparagine glycosylation sites follow: asparagine 515 and asparagine 728. A compositionally biased stretch (polar residues) spans 877–887; the sequence is PSLSHSGNRQR. The interval 877-899 is disordered; it reads PSLSHSGNRQRPPSGAGSVTPER. The N-linked (GlcNAc...) asparagine glycan is linked to asparagine 939. A helical membrane pass occupies residues 999-1021; the sequence is GQTIPVFAFLGAMVVLAFFVVQI. The Cytoplasmic segment spans residues 1022 to 1052; the sequence is NKAKSRPKRRKPRVKRPQLMQQVHPPKTPSV. Over residues 1027-1037 the composition is skewed to basic residues; sequence RPKRRKPRVKR. The interval 1027–1052 is disordered; the sequence is RPKRRKPRVKRPQLMQQVHPPKTPSV.

It belongs to the peptidase S8 family. Interacts with LYSET; this interaction bridges GNPTAB to MBTPS1. The cofactor is Ca(2+). Post-translationally, the 148 kDa zymogen is processed progressively into two membrane-bound 120 and 106 kDa forms in the endoplasmic reticulum, and late into a secreted 98 kDa form. The propeptide is autocatalytically removed through an intramolecular cleavage after Leu-186. Further cleavage generates 14, 10, and 8 kDa intermediates. Widely expressed.

Its subcellular location is the endoplasmic reticulum membrane. It localises to the golgi apparatus membrane. The enzyme catalyses Processes precursors containing basic and hydrophobic/aliphatic residues at P4 and P2, respectively, with a relatively relaxed acceptance of amino acids at P1 and P3.. Inhibited by divalent copper and zinc ions, but not by nickel or cobalt. Inhibited by its prosegment, but not smaller fragments. Inhibited by 4-(2-aminoethyl)benzenesulfonyl fluoride (AEBSF), a serine protease inhibitor. Serine protease that cleaves after hydrophobic or small residues, provided that Arg or Lys is in position P4: known substrates include SREBF1/SREBP1, SREBF2/SREBP2, BDNF, GNPTAB, ATF6, ATF6B and FAM20C. Cleaves substrates after Arg-Ser-Val-Leu (SREBP2), Arg-His-Leu-Leu (ATF6), Arg-Gly-Leu-Thr (BDNF) and its own propeptide after Arg-Arg-Leu-Leu. Catalyzes the first step in the proteolytic activation of the sterol regulatory element-binding proteins (SREBPs) SREBF1/SREBP1 and SREBF2/SREBP2. Also mediates the first step in the proteolytic activation of the cyclic AMP-dependent transcription factor ATF-6 (ATF6 and ATF6B). Mediates the protein cleavage of GNPTAB into subunit alpha and beta, thereby participating in biogenesis of lysosomes. Cleaves the propeptide from FAM20C which is required for FAM20C secretion from the Golgi apparatus membrane and for enhancement of FAM20C kinase activity, promoting osteoblast differentiation and biomineralization. Involved in the regulation of M6P-dependent Golgi-to-lysosome trafficking of lysosomal enzymes. It is required for the activation of CREB3L2/BBF2H7, a transcriptional activator of MIA3/TANGO and other genes controlling mega vesicle formation. Therefore, it plays a key role in the regulation of mega vesicle-mediated collagen trafficking. In astrocytes and osteoblasts, upon DNA damage and ER stress, mediates the first step of the regulated intramembrane proteolytic activation of the transcription factor CREB3L1, leading to the inhibition of cell-cycle progression. The protein is Membrane-bound transcription factor site-1 protease of Homo sapiens (Human).